A 288-amino-acid chain; its full sequence is Programmed cell death protein 1 (288 aa).

Residues methionine 1–leucine 24 form the signal peptide. The Extracellular segment spans residues leucine 25–methionine 169. The region spanning proline 31 to glycine 139 is the Ig-like V-type domain. N-linked (GlcNAc...) asparagine glycosylation is found at asparagine 49, asparagine 58, asparagine 74, and asparagine 116. An intrachain disulfide couples cysteine 54 to cysteine 123. The interaction with CD274/PDCD1L1 stretch occupies residues leucine 70–glutamate 77. The helical transmembrane segment at valine 170–leucine 190 threads the bilayer. Over alanine 191–leucine 288 the chain is Cytoplasmic. Residues valine 223 to leucine 228 carry the ITIM motif motif. The residue at position 225 (tyrosine 225) is a Phosphotyrosine. Lysine 235 is covalently cross-linked (Glycyl lysine isopeptide (Lys-Gly) (interchain with G-Cter in ubiquitin)). Residue threonine 236 is modified to Phosphothreonine; by MAPK3. The short motif at glutamate 247–isoleucine 251 is the ITSM motif element. Phosphotyrosine is present on tyrosine 248. The disordered stretch occupies residues glycine 263–leucine 288. Positions proline 277–leucine 288 are enriched in basic and acidic residues.

In terms of assembly, monomer. Interacts with CD274/PDCD1L1. Interacts with CD273/PDCD1LG2. Interacts with FBXO38; leading to ubiquitination and degradation by the proteasome. Post-translationally, ubiquitinated at Lys-235 by the SCF(FBXO38) complex, leading to its proteasomal degradation. Ubiquitinated via 'Lys-48'-linked polyubiquitin chains. Deubiquitinated and thus stabilized by USP5. In terms of processing, tyrosine phosphorylated at Tyr-225 (within ITIM motif) and Tyr-248 (ITSM motif) upon ligand binding. Phosphorylation at Tyr-248 promotes the recruitment of the protein tyrosine phosphatase PTPN11/SHP-2 that mediates dephosphorylation of key TCR proximal signaling molecules, such as ZAP70, PRKCQ/PKCtheta and CD247/CD3zeta. Phosphorylation at Thr-236 promotes the recruitment of the deubiquitinase USP5. Thymus-specific.

The protein localises to the cell membrane. In terms of biological role, inhibitory receptor on antigen activated T-cells that plays a critical role in induction and maintenance of immune tolerance to self. Delivers inhibitory signals upon binding to ligands, such as CD274/PDCD1L1 and CD273/PDCD1LG2. Following T-cell receptor (TCR) engagement, PDCD1 associates with CD3-TCR in the immunological synapse and directly inhibits T-cell activation. Suppresses T-cell activation through the recruitment of PTPN11/SHP-2: following ligand-binding, PDCD1 is phosphorylated within the ITSM motif, leading to the recruitment of the protein tyrosine phosphatase PTPN11/SHP-2 that mediates dephosphorylation of key TCR proximal signaling molecules, such as ZAP70, PRKCQ/PKCtheta and CD247/CD3zeta. The PDCD1-mediated inhibitory pathway is exploited by tumors to attenuate anti-tumor immunity and facilitate tumor survival. The protein is Programmed cell death protein 1 of Mus musculus (Mouse).